We begin with the raw amino-acid sequence, 416 residues long: Alpha-1-antiproteinase (416 aa).

The signal sequence occupies residues 1-24 (MALSITRGLLLLAALCCLAPTSLA). Asparagine 68, asparagine 105, asparagine 143, and asparagine 269 each carry an N-linked (GlcNAc...) asparagine glycan. Residues 371-390 (GATFLEAIPMSLPPDVEFNR) form an RCL region. The residue at position 381 (serine 381) is a Phosphoserine.

Belongs to the serpin family. In terms of assembly, interacts with CELA2A. Interacts with ERGIC3 and LMAN1/ERGIC53. Interacts with PRSS1/Trypsin. As to expression, plasma.

It localises to the secreted. Its function is as follows. Inhibits human leukocyte elastase, pig pancreatic elastase and bovine trypsin on a 1:1 molar basis. This Ovis aries (Sheep) protein is Alpha-1-antiproteinase.